Here is a 1364-residue protein sequence, read N- to C-terminus: Serine protease EatA (1364 aa).

The first 56 residues, M1 to A56, serve as a signal peptide directing secretion. One can recognise a Peptidase S6 domain in the interval A57–Q307. Residues H134, D162, and S267 each act as charge relay system in the active site. Residues D1098 to F1364 enclose the Autotransporter domain.

Cleaved to release the mature protein from the outer membrane.

Its subcellular location is the periplasm. It localises to the secreted. The protein localises to the cell surface. The protein resides in the cell outer membrane. Its activity is regulated as follows. Inhibited by phenylmethylsulfonyl fluoride. Its function is as follows. Autotransporter serine protease probably involved in virulence. This chain is Serine protease EatA (eatA), found in Escherichia coli O78:H11 (strain H10407 / ETEC).